A 667-amino-acid chain; its full sequence is DNA ligase (667 aa).

Residues 32–36 (DSVYD), 81–82 (SL), and glutamate 111 contribute to the NAD(+) site. Catalysis depends on lysine 113, which acts as the N6-AMP-lysine intermediate. Residues arginine 134, glutamate 168, lysine 285, and lysine 309 each contribute to the NAD(+) site. Positions 403, 406, 421, and 426 each coordinate Zn(2+). In terms of domain architecture, BRCT spans 588 to 667 (VGDNPFAGKT…DNLIEQLNLI (80 aa)).

The protein belongs to the NAD-dependent DNA ligase family. LigA subfamily. Mg(2+) is required as a cofactor. Mn(2+) serves as cofactor.

It carries out the reaction NAD(+) + (deoxyribonucleotide)n-3'-hydroxyl + 5'-phospho-(deoxyribonucleotide)m = (deoxyribonucleotide)n+m + AMP + beta-nicotinamide D-nucleotide.. Functionally, DNA ligase that catalyzes the formation of phosphodiester linkages between 5'-phosphoryl and 3'-hydroxyl groups in double-stranded DNA using NAD as a coenzyme and as the energy source for the reaction. It is essential for DNA replication and repair of damaged DNA. The sequence is that of DNA ligase from Lysinibacillus sphaericus (strain C3-41).